Reading from the N-terminus, the 457-residue chain is MTDSFAHCASHINYRHKMKTMFIFSTPCCSPSTAFFSPFRASNSKPLRSTLSLRSSISSSSITSTSHCSLAFNIVKHKEKNVVSANMTSSVSSRTFLNAQNEQDVLSGIKKEVEAGTLPASIAAGMEEVYLNYKSAVIKSGDPKANEIVLSNMTALLDRIFLDVKEPFVFEAHHKAKREPFDYYMFGQNYIRPLVDFETSYVGNMPLFIQMEEQLKQGHNIILMSNHQSEADPAIIALLLEMRLPHIAENLIYVAGDRVITVPLCKPFSIGRNLICVYSKKHMLDNPELVDMKRKANTRSRKEMAMLLRSGSQIIWIAPSGGRDRPVANSGEWAPAPFDSSSVDNMRRLVDHSGPPGHIYPLAILCHDIMPPPLKVEKEIGEKRIISYHGTGISTAPEISFSNTTAACENPEKAKDAYTKALYDSVTEQYDVLKSAIHGKKGLQASTPVVSLSQPWK.

Residues 1 to 88 (MTDSFAHCAS…EKNVVSANMT (88 aa)) constitute a chloroplast transit peptide. The HXXXXD motif motif lies at 227 to 232 (HQSEAD).

This sequence belongs to the GPAT/DAPAT family. Post-translationally, the N-terminus is blocked.

The protein localises to the plastid. It localises to the chloroplast stroma. It catalyses the reaction sn-glycerol 3-phosphate + an acyl-CoA = a 1-acyl-sn-glycero-3-phosphate + CoA. It functions in the pathway phospholipid metabolism; CDP-diacylglycerol biosynthesis; CDP-diacylglycerol from sn-glycerol 3-phosphate: step 1/3. Esterifies acyl-group from acyl-ACP to the sn-1 position of glycerol-3-phosphate. The enzyme from chilling-resistant plants discriminates against non-fluid palmitic acid and selects oleic acid whereas the enzyme from sensitive plants accepts both fatty acids. This is an oleate-selective acyltransferase. In Pisum sativum (Garden pea), this protein is Glycerol-3-phosphate acyltransferase, chloroplastic (GPAT).